A 439-amino-acid polypeptide reads, in one-letter code: Adenylosuccinate synthetase (439 aa).

Residues 14 to 20 (GDEGKGK) and 42 to 44 (GHT) each bind GTP. The active-site Proton acceptor is the Asp-15. Mg(2+) contacts are provided by Asp-15 and Gly-42. IMP-binding positions include 15–18 (DEGK), 40–43 (NAGH), Thr-130, Arg-144, Gln-225, Thr-240, and Arg-304. His-43 acts as the Proton donor in catalysis. A substrate-binding site is contributed by 300–306 (TTTGRRR). GTP-binding positions include Arg-306, 332–334 (KLD), and 414–416 (SLG).

The protein belongs to the adenylosuccinate synthetase family. In terms of assembly, homodimer. Mg(2+) serves as cofactor.

The protein resides in the cytoplasm. The enzyme catalyses IMP + L-aspartate + GTP = N(6)-(1,2-dicarboxyethyl)-AMP + GDP + phosphate + 2 H(+). It participates in purine metabolism; AMP biosynthesis via de novo pathway; AMP from IMP: step 1/2. Functionally, plays an important role in the de novo pathway of purine nucleotide biosynthesis. Catalyzes the first committed step in the biosynthesis of AMP from IMP. This Prochlorococcus marinus (strain MIT 9303) protein is Adenylosuccinate synthetase.